The following is a 566-amino-acid chain: Glucose starvation modulator protein 1 (566 aa).

The segment at residues 20 to 48 (CVFCHQKHLQCSNERPCKNCVKRNIAHGC) is a DNA-binding region (zn(2)-C6 fungal-type). Disordered stretches follow at residues 63–92 (GVPGAVSNKQSTPRKKLKTSPVSTSVSPMD) and 250–270 (KQASPSPSNTSTSENNTNTLS). Residues 253-270 (SPSPSNTSTSENNTNTLS) are compositionally biased toward low complexity.

The protein belongs to the ERT1/acuK family.

It localises to the nucleus. Its function is as follows. Transcription factor which regulates nonfermentable carbon utilization. The sequence is that of Glucose starvation modulator protein 1 (GSM1) from Candida albicans (strain WO-1) (Yeast).